Consider the following 93-residue polypeptide: uncharacterized protein (93 aa).

Residues 41-62 (RSANRIPTTSSTSTSGTIPTTT) are disordered. Residues 46-62 (IPTTSSTSTSGTIPTTT) show a composition bias toward low complexity.

This is an uncharacterized protein from Dictyostelium discoideum (Social amoeba).